A 214-amino-acid chain; its full sequence is Corrinoid adenosyltransferase (214 aa).

50-56 is an ATP binding site; sequence GKGKGKS.

The protein belongs to the Cob(I)alamin adenosyltransferase family. Monomer. Mn(2+) is required as a cofactor.

It is found in the cytoplasm. The enzyme catalyses 2 cob(II)yrinate a,c diamide + reduced [electron-transfer flavoprotein] + 2 ATP = 2 adenosylcob(III)yrinate a,c-diamide + 2 triphosphate + oxidized [electron-transfer flavoprotein] + 3 H(+). It catalyses the reaction 2 cob(II)alamin + reduced [electron-transfer flavoprotein] + 2 ATP = 2 adenosylcob(III)alamin + 2 triphosphate + oxidized [electron-transfer flavoprotein] + 3 H(+). The protein operates within cofactor biosynthesis; adenosylcobalamin biosynthesis; adenosylcobalamin from cob(II)yrinate a,c-diamide: step 2/7. Functionally, required for both de novo synthesis of the corrin ring for the assimilation of exogenous corrinoids. Participates in the adenosylation of a variety of incomplete and complete corrinoids. In Sinorhizobium sp, this protein is Corrinoid adenosyltransferase (cobO).